The following is a 271-amino-acid chain: Ribosomal RNA small subunit methyltransferase A (271 aa).

The S-adenosyl-L-methionine site is built by H18, L20, G45, E66, D91, and N113.

Belongs to the class I-like SAM-binding methyltransferase superfamily. rRNA adenine N(6)-methyltransferase family. RsmA subfamily.

The protein resides in the cytoplasm. The catalysed reaction is adenosine(1518)/adenosine(1519) in 16S rRNA + 4 S-adenosyl-L-methionine = N(6)-dimethyladenosine(1518)/N(6)-dimethyladenosine(1519) in 16S rRNA + 4 S-adenosyl-L-homocysteine + 4 H(+). In terms of biological role, specifically dimethylates two adjacent adenosines (A1518 and A1519) in the loop of a conserved hairpin near the 3'-end of 16S rRNA in the 30S particle. May play a critical role in biogenesis of 30S subunits. The polypeptide is Ribosomal RNA small subunit methyltransferase A (Baumannia cicadellinicola subsp. Homalodisca coagulata).